The following is a 330-amino-acid chain: Molybdate/tungstate import ATP-binding protein WtpC (330 aa).

Positions 3–232 (LMVEGISKDY…PASEEVAKFL (230 aa)) constitute an ABC transporter domain. 34 to 41 (GPSGAGKT) contacts ATP.

This sequence belongs to the ABC transporter superfamily. Sulfate/tungstate importer (TC 3.A.1.6) family. The complex is composed of two ATP-binding proteins (WtpC), two transmembrane proteins (WtpB) and a solute-binding protein (WtpA).

It is found in the cell membrane. The catalysed reaction is tungstate(in) + ATP + H2O = tungstate(out) + ADP + phosphate + H(+). Functionally, part of the ABC transporter complex WtpABC involved in molybdate/tungstate import. Responsible for energy coupling to the transport system. In Thermococcus kodakarensis (strain ATCC BAA-918 / JCM 12380 / KOD1) (Pyrococcus kodakaraensis (strain KOD1)), this protein is Molybdate/tungstate import ATP-binding protein WtpC (wtpC).